Reading from the N-terminus, the 276-residue chain is Large ribosomal subunit protein uL2 (276 aa).

Residues 225 to 276 form a disordered region; that stretch reads MNPNDHPHGGGEGRNPIGRNPVTPWGKPALGAKTRKKKNPSNRFIVKRRGKK. Basic residues predominate over residues 257–276; the sequence is KTRKKKNPSNRFIVKRRGKK.

It belongs to the universal ribosomal protein uL2 family. In terms of assembly, part of the 50S ribosomal subunit. Forms a bridge to the 30S subunit in the 70S ribosome.

Functionally, one of the primary rRNA binding proteins. Required for association of the 30S and 50S subunits to form the 70S ribosome, for tRNA binding and peptide bond formation. It has been suggested to have peptidyltransferase activity; this is somewhat controversial. Makes several contacts with the 16S rRNA in the 70S ribosome. In Desulfitobacterium hafniense (strain DSM 10664 / DCB-2), this protein is Large ribosomal subunit protein uL2.